Reading from the N-terminus, the 130-residue chain is uncharacterized protein (130 aa).

The Cytoplasmic portion of the chain corresponds to 1-58 (MREQLKLFTREIVDFTFLILSGFDYYQTLLISSNSSKKRPKDSSLLSEKKKKKKKKKK). Positions 34-57 (NSSKKRPKDSSLLSEKKKKKKKKK) are disordered. Residues 59 to 79 (DVLSYLSYLKDLPFVPFLFWQ) traverse the membrane as a helical segment. Over 80 to 94 (PGYSQREKNPRQHSL) the chain is Extracellular. Residues 95–115 (FIMTITKPGMISMADMNYVVS) form a helical membrane-spanning segment. Over 116–130 (KNRSLNRPAERGGNR) the chain is Cytoplasmic.

The protein localises to the membrane. This is an uncharacterized protein from Saccharomyces cerevisiae (strain ATCC 204508 / S288c) (Baker's yeast).